A 128-amino-acid polypeptide reads, in one-letter code: NADH dehydrogenase [ubiquinone] 1 beta subcomplex subunit 6 (128 aa).

Thr2 is subject to N-acetylthreonine. Residue Lys24 is modified to N6-acetyllysine. A helical membrane pass occupies residues 68 to 86 (SIFVFTHILVPAWIIHYYM).

The protein belongs to the complex I NDUFB6 subunit family. As to quaternary structure, complex I is composed of 45 different subunits.

The protein localises to the mitochondrion inner membrane. Functionally, accessory subunit of the mitochondrial membrane respiratory chain NADH dehydrogenase (Complex I), that is believed not to be involved in catalysis. Complex I functions in the transfer of electrons from NADH to the respiratory chain. The immediate electron acceptor for the enzyme is believed to be ubiquinone. The protein is NADH dehydrogenase [ubiquinone] 1 beta subcomplex subunit 6 (NDUFB6) of Pongo abelii (Sumatran orangutan).